The sequence spans 511 residues: Apolipoprotein N-acyltransferase (511 aa).

The next 6 membrane-spanning stretches (helical) occupy residues 7-25 (PGWP…TPLA), 58-78 (GWWY…VSIH), 90-110 (FLML…AWLW), 125-145 (LAFA…LTGF), 163-183 (VPVG…ALLV), and 192-212 (GASL…GLYL). Residues 230 to 470 (IQGNIAQELK…QGILRGEVIP (241 aa)) enclose the CN hydrolase domain. The active-site Proton acceptor is E269. Residue K330 is part of the active site. The active-site Nucleophile is the C382. Residues 478–498 (LQYRVWPLAGLAGVLLLWALL) form a helical membrane-spanning segment.

It belongs to the CN hydrolase family. Apolipoprotein N-acyltransferase subfamily.

It localises to the cell inner membrane. It catalyses the reaction N-terminal S-1,2-diacyl-sn-glyceryl-L-cysteinyl-[lipoprotein] + a glycerophospholipid = N-acyl-S-1,2-diacyl-sn-glyceryl-L-cysteinyl-[lipoprotein] + a 2-acyl-sn-glycero-3-phospholipid + H(+). It functions in the pathway protein modification; lipoprotein biosynthesis (N-acyl transfer). In terms of biological role, catalyzes the phospholipid dependent N-acylation of the N-terminal cysteine of apolipoprotein, the last step in lipoprotein maturation. In Pseudomonas paraeruginosa (strain DSM 24068 / PA7) (Pseudomonas aeruginosa (strain PA7)), this protein is Apolipoprotein N-acyltransferase.